The primary structure comprises 208 residues: 3-demethoxyubiquinol 3-hydroxylase (208 aa).

Residues E57, E87, H90, E139, E171, and H174 each coordinate Fe cation.

This sequence belongs to the COQ7 family. Fe cation is required as a cofactor.

The protein resides in the cell membrane. The catalysed reaction is a 5-methoxy-2-methyl-3-(all-trans-polyprenyl)benzene-1,4-diol + AH2 + O2 = a 3-demethylubiquinol + A + H2O. The protein operates within cofactor biosynthesis; ubiquinone biosynthesis. Its function is as follows. Catalyzes the hydroxylation of 2-nonaprenyl-3-methyl-6-methoxy-1,4-benzoquinol during ubiquinone biosynthesis. This is 3-demethoxyubiquinol 3-hydroxylase from Burkholderia pseudomallei (strain 668).